We begin with the raw amino-acid sequence, 549 residues long: Glucose-6-phosphate isomerase 1 (549 aa).

Glutamate 358 serves as the catalytic Proton donor. Catalysis depends on residues histidine 389 and lysine 513.

Belongs to the GPI family.

The protein localises to the cytoplasm. The enzyme catalyses alpha-D-glucose 6-phosphate = beta-D-fructose 6-phosphate. It functions in the pathway carbohydrate biosynthesis; gluconeogenesis. Its pathway is carbohydrate degradation; glycolysis; D-glyceraldehyde 3-phosphate and glycerone phosphate from D-glucose: step 2/4. Its function is as follows. Catalyzes the reversible isomerization of glucose-6-phosphate to fructose-6-phosphate. The sequence is that of Glucose-6-phosphate isomerase 1 from Streptomyces avermitilis (strain ATCC 31267 / DSM 46492 / JCM 5070 / NBRC 14893 / NCIMB 12804 / NRRL 8165 / MA-4680).